We begin with the raw amino-acid sequence, 203 residues long: Ras-related protein RABD2a (203 aa).

GTP is bound by residues 15-23, 33-40, 63-67, 121-124, and 151-153; these read GDSGVGKSC, YVESYIST, DTAGQ, NKSD, and SAK. An Effector region motif is present at residues 37-45; that stretch reads YISTIGVDF. Positions 176–203 are disordered; sequence QPAGNNARPPTVQIRGQPVAQKNGCCST. 2 S-geranylgeranyl cysteine lipidation sites follow: Cys-200 and Cys-201.

It belongs to the small GTPase superfamily. Rab family. Does not interact with GC5.

Its subcellular location is the golgi apparatus. The protein localises to the trans-Golgi network membrane. It is found in the golgi apparatus membrane. Its function is as follows. Protein transport. Regulator of membrane traffic from the Golgi apparatus towards the endoplasmic reticulum (ER). This Arabidopsis thaliana (Mouse-ear cress) protein is Ras-related protein RABD2a (RABD2A).